Reading from the N-terminus, the 331-residue chain is NAD-dependent protein deacetylase HST2 (331 aa).

The Deacetylase sirtuin-type domain occupies 1-262 (MPSLDDILKP…EKLCTLLGLD (262 aa)). NAD(+)-binding positions include 26–46 (GAGISTGAGIPDFRSPDTGLY) and 109–112 (QNID). Residue His129 is the Proton acceptor of the active site. Zn(2+) contacts are provided by Cys137, Cys140, Cys161, and Cys164. Residues 201–203 (GTS), 226–228 (NKE), and Cys248 each bind NAD(+). Residues 276–331 (YSKAETKETKMHEIEDKLKEEAHLKEDKHTTKVDKKEKQNDANDKELEQLIDKLKI) are a coiled coil. The interval 283–319 (ETKMHEIEDKLKEEAHLKEDKHTTKVDKKEKQNDAND) is disordered.

This sequence belongs to the sirtuin family. Class I subfamily. The cofactor is Zn(2+).

It localises to the cytoplasm. Its subcellular location is the nucleus. The catalysed reaction is N(6)-acetyl-L-lysyl-[protein] + NAD(+) + H2O = 2''-O-acetyl-ADP-D-ribose + nicotinamide + L-lysyl-[protein]. Its function is as follows. NAD-dependent histone deacetylase that is involved in nuclear silencing events. Derepresses subtelomeric silencing and increases repression in nucleolar (rDNA) silencing. Its function is negatively regulated by active nuclear export. In Candida albicans (strain SC5314 / ATCC MYA-2876) (Yeast), this protein is NAD-dependent protein deacetylase HST2 (HST2).